We begin with the raw amino-acid sequence, 118 residues long: Non-specific lipid-transfer protein 3 (118 aa).

The first 25 residues, 1–25 (MARSMNLACVALVMCMVVIAPMAEA), serve as a signal peptide directing secretion. 4 disulfide bridges follow: C29–C76, C39–C53, C54–C99, and C74–C113.

This sequence belongs to the plant LTP family.

In terms of biological role, plant non-specific lipid-transfer proteins transfer phospholipids as well as galactolipids across membranes. May play a role in wax or cutin deposition in the cell walls of expanding epidermal cells and certain secretory tissues. This Lens culinaris (Lentil) protein is Non-specific lipid-transfer protein 3.